The following is a 155-amino-acid chain: DNA gyrase inhibitor (155 aa).

Belongs to the DNA gyrase inhibitor family. As to quaternary structure, interacts with DNA gyrase.

Its subcellular location is the cytoplasm. Functionally, inhibits the supercoiling activity of DNA gyrase. Acts by inhibiting DNA gyrase at an early step, prior to (or at the step of) binding of DNA by the gyrase. It protects cells against toxins that target DNA gyrase, by inhibiting activity of these toxins and reducing the formation of lethal double-strand breaks in the cell. The polypeptide is DNA gyrase inhibitor (Edwardsiella piscicida).